A 561-amino-acid polypeptide reads, in one-letter code: Excitatory amino acid transporter 4 (561 aa).

Topologically, residues 1–52 are cytoplasmic; it reads MSSHGNSLFLRESGAGGGCLQGLQDSLQQRALRTRLRLQTMTREHVRRFLRR. At S2 the chain carries Phosphoserine. 3 consecutive transmembrane segments (helical) span residues 53–73, 96–116, and 130–150; these read NAFILLTVSAVIIGVSLAFAL, MLQMLVLPLIVSSLVTGMASL, and VYYMVTTVIAVFIGILMVTII. N213, N229, and N236 each carry an N-linked (GlcNAc...) asparagine glycan. The next 3 membrane-spanning stretches (helical) occupy residues 259–282, 292–319, and 341–362; these read SANGINALGLVVFSVAFGLVIGGM, FFDSLNEAIMRLVGIIIWYAPVGILFLI, and LTVIVGLFLHAGGVLPLIYFLV. The discontinuously helical intramembrane region spans 368-398; that stretch reads FPFIGGMLQALITAMGTSSSSATLPITFRCL. 385–387 lines the L-aspartate pocket; the sequence is SSS. A helical membrane pass occupies residues 408-434; that stretch reads ITRFVLPVGATVNMDGTALYEALAAIF. The Na(+) site is built by G416, T418, and N420. L-aspartate contacts are provided by residues T424, 465 to 469, D498, and N505; that span reads IPQAG. Positions 448–481 form an intramembrane region, discontinuously helical; sequence ITTISITATAASVGAAGIPQAGLVTMVIVLTSVG. The helical transmembrane segment at 495–516 threads the bilayer; it reads WFLDRLRTMTNVLGDSIGAAVI. Positions 505 and 509 each coordinate Na(+).

Belongs to the dicarboxylate/amino acid:cation symporter (DAACS) (TC 2.A.23) family. SLC1A6 subfamily. Homotrimer. As to expression, brain specific.

The protein localises to the cell membrane. It catalyses the reaction K(+)(in) + L-glutamate(out) + 3 Na(+)(out) + H(+)(out) = K(+)(out) + L-glutamate(in) + 3 Na(+)(in) + H(+)(in). The catalysed reaction is K(+)(in) + L-aspartate(out) + 3 Na(+)(out) + H(+)(out) = K(+)(out) + L-aspartate(in) + 3 Na(+)(in) + H(+)(in). The enzyme catalyses D-aspartate(out) + K(+)(in) + 3 Na(+)(out) + H(+)(out) = D-aspartate(in) + K(+)(out) + 3 Na(+)(in) + H(+)(in). Its function is as follows. Sodium-dependent, high-affinity amino acid transporter that mediates the uptake of L-glutamate and also L-aspartate and D-aspartate. Functions as a symporter that transports one amino acid molecule together with two or three Na(+) ions and one proton, in parallel with the counter-transport of one K(+) ion. Mediates Cl(-) flux that is not coupled to amino acid transport; this avoids the accumulation of negative charges due to aspartate and Na(+) symport. Plays a redundant role in the rapid removal of released glutamate from the synaptic cleft, which is essential for terminating the postsynaptic action of glutamate. In Mus musculus (Mouse), this protein is Excitatory amino acid transporter 4 (Slc1a6).